The sequence spans 283 residues: MATKLQDENTPCLAATPSEPRPTVLVFDSGVGGLSVYDEIRRLLPDLHYIYAFDNVAFPYGEKSETFIVERVVEIVTAVQQRYPLSLAVIACNTASTVSLPALREKFAFPVVGVVPAIKPAARLTANGVVGLLATRATVKRPYTHELIARFANECQIAMLGSAELVELAEAKLHGDSVSLEELRRILRPWLRMPEPPDTVVLGCTHFPLLRDELLQVLPEGTRLVDSGAAIARRTAWLLEHEAPDAKSTDANIAYCMAMTPGAEQLLPVLQRYGFETLEKLPV.

Residues 28-29 (DS) and 60-61 (YG) each bind substrate. The Proton donor/acceptor role is filled by cysteine 92. 93-94 (NT) serves as a coordination point for substrate. Cysteine 204 functions as the Proton donor/acceptor in the catalytic mechanism. 205 to 206 (TH) lines the substrate pocket.

This sequence belongs to the aspartate/glutamate racemases family.

It carries out the reaction L-glutamate = D-glutamate. It participates in cell wall biogenesis; peptidoglycan biosynthesis. In terms of biological role, provides the (R)-glutamate required for cell wall biosynthesis. This Salmonella enteritidis PT4 (strain P125109) protein is Glutamate racemase.